The chain runs to 267 residues: 4-hydroxy-tetrahydrodipicolinate reductase (267 aa).

NAD(+) contacts are provided by residues 8-13 (GAAGRM), E34, 98-100 (GST), and 122-125 (APNM). H155 acts as the Proton donor/acceptor in catalysis. H156 is a binding site for (S)-2,3,4,5-tetrahydrodipicolinate. The active-site Proton donor is K159. Residue 165–166 (GT) coordinates (S)-2,3,4,5-tetrahydrodipicolinate.

This sequence belongs to the DapB family.

Its subcellular location is the cytoplasm. It catalyses the reaction (S)-2,3,4,5-tetrahydrodipicolinate + NAD(+) + H2O = (2S,4S)-4-hydroxy-2,3,4,5-tetrahydrodipicolinate + NADH + H(+). The enzyme catalyses (S)-2,3,4,5-tetrahydrodipicolinate + NADP(+) + H2O = (2S,4S)-4-hydroxy-2,3,4,5-tetrahydrodipicolinate + NADPH + H(+). It functions in the pathway amino-acid biosynthesis; L-lysine biosynthesis via DAP pathway; (S)-tetrahydrodipicolinate from L-aspartate: step 4/4. In terms of biological role, catalyzes the conversion of 4-hydroxy-tetrahydrodipicolinate (HTPA) to tetrahydrodipicolinate. The sequence is that of 4-hydroxy-tetrahydrodipicolinate reductase from Syntrophotalea carbinolica (strain DSM 2380 / NBRC 103641 / GraBd1) (Pelobacter carbinolicus).